Here is a 690-residue protein sequence, read N- to C-terminus: Protease 2 (690 aa).

Residues Ser-534, Asp-619, and His-654 each act as charge relay system in the active site.

This sequence belongs to the peptidase S9A family.

It catalyses the reaction Hydrolysis of -Arg-|-Xaa- and -Lys-|-Xaa- bonds in oligopeptides, even when P1' residue is proline.. Functionally, cleaves peptide bonds on the C-terminal side of lysyl and argininyl residues. The chain is Protease 2 (ptrB) from Moraxella lacunata.